The sequence spans 146 residues: Hemoglobin subunit theta (146 aa).

The Globin domain maps to 2–146 (HFTAEEKSVI…VATALAHKYH (145 aa)). Heme b-binding residues include histidine 63 and histidine 92.

It belongs to the globin family.

The chain is Hemoglobin subunit theta from Sus scrofa (Pig).